We begin with the raw amino-acid sequence, 71 residues long: Large ribosomal subunit protein bL31 (71 aa).

Residues C16, C18, C37, and C40 each contribute to the Zn(2+) site.

Belongs to the bacterial ribosomal protein bL31 family. Type A subfamily. Part of the 50S ribosomal subunit. Zn(2+) is required as a cofactor.

Its function is as follows. Binds the 23S rRNA. This Chromohalobacter salexigens (strain ATCC BAA-138 / DSM 3043 / CIP 106854 / NCIMB 13768 / 1H11) protein is Large ribosomal subunit protein bL31.